A 101-amino-acid polypeptide reads, in one-letter code: Large ribosomal subunit protein uL23 (101 aa).

It belongs to the universal ribosomal protein uL23 family. Part of the 50S ribosomal subunit. Contacts protein L29, and trigger factor when it is bound to the ribosome.

One of the early assembly proteins it binds 23S rRNA. One of the proteins that surrounds the polypeptide exit tunnel on the outside of the ribosome. Forms the main docking site for trigger factor binding to the ribosome. The polypeptide is Large ribosomal subunit protein uL23 (Aromatoleum aromaticum (strain DSM 19018 / LMG 30748 / EbN1) (Azoarcus sp. (strain EbN1))).